A 217-amino-acid chain; its full sequence is Octanoyltransferase (217 aa).

Residues 32 to 207 (SESHDELWIV…TFSQLLGYQH (176 aa)) enclose the BPL/LPL catalytic domain. Substrate-binding positions include 71 to 78 (RGGQVTYH), 138 to 140 (SLG), and 151 to 153 (GLA). Cys-169 serves as the catalytic Acyl-thioester intermediate.

It belongs to the LipB family.

It localises to the cytoplasm. It catalyses the reaction octanoyl-[ACP] + L-lysyl-[protein] = N(6)-octanoyl-L-lysyl-[protein] + holo-[ACP] + H(+). Its pathway is protein modification; protein lipoylation via endogenous pathway; protein N(6)-(lipoyl)lysine from octanoyl-[acyl-carrier-protein]: step 1/2. Functionally, catalyzes the transfer of endogenously produced octanoic acid from octanoyl-acyl-carrier-protein onto the lipoyl domains of lipoate-dependent enzymes. Lipoyl-ACP can also act as a substrate although octanoyl-ACP is likely to be the physiological substrate. The polypeptide is Octanoyltransferase (Shewanella baltica (strain OS223)).